Consider the following 336-residue polypeptide: Holliday junction branch migration complex subunit RuvB (336 aa).

Residues 4-184 form a large ATPase domain (RuvB-L) region; sequence ADRLISAGTT…FGIVQRLEFY (181 aa). Residues Ile23, Arg24, Gly65, Lys68, Thr69, Thr70, 131–133, Arg174, Tyr184, and Arg221 contribute to the ATP site; that span reads EDY. A Mg(2+)-binding site is contributed by Thr69. Residues 185–255 form a small ATPAse domain (RuvB-S) region; the sequence is QVPDLQYIVS…IAAQALDMLN (71 aa). Residues 258-336 form a head domain (RuvB-H) region; it reads AEGFDYMDRK…HFGITPPEMP (79 aa). DNA is bound by residues Arg294, Arg313, and Arg318.

It belongs to the RuvB family. In terms of assembly, homohexamer. Forms an RuvA(8)-RuvB(12)-Holliday junction (HJ) complex. HJ DNA is sandwiched between 2 RuvA tetramers; dsDNA enters through RuvA and exits via RuvB. An RuvB hexamer assembles on each DNA strand where it exits the tetramer. Each RuvB hexamer is contacted by two RuvA subunits (via domain III) on 2 adjacent RuvB subunits; this complex drives branch migration. In the full resolvosome a probable DNA-RuvA(4)-RuvB(12)-RuvC(2) complex forms which resolves the HJ.

The protein localises to the cytoplasm. It carries out the reaction ATP + H2O = ADP + phosphate + H(+). Functionally, the RuvA-RuvB-RuvC complex processes Holliday junction (HJ) DNA during genetic recombination and DNA repair, while the RuvA-RuvB complex plays an important role in the rescue of blocked DNA replication forks via replication fork reversal (RFR). RuvA specifically binds to HJ cruciform DNA, conferring on it an open structure. The RuvB hexamer acts as an ATP-dependent pump, pulling dsDNA into and through the RuvAB complex. RuvB forms 2 homohexamers on either side of HJ DNA bound by 1 or 2 RuvA tetramers; 4 subunits per hexamer contact DNA at a time. Coordinated motions by a converter formed by DNA-disengaged RuvB subunits stimulates ATP hydrolysis and nucleotide exchange. Immobilization of the converter enables RuvB to convert the ATP-contained energy into a lever motion, pulling 2 nucleotides of DNA out of the RuvA tetramer per ATP hydrolyzed, thus driving DNA branch migration. The RuvB motors rotate together with the DNA substrate, which together with the progressing nucleotide cycle form the mechanistic basis for DNA recombination by continuous HJ branch migration. Branch migration allows RuvC to scan DNA until it finds its consensus sequence, where it cleaves and resolves cruciform DNA. The protein is Holliday junction branch migration complex subunit RuvB of Escherichia coli (strain ATCC 8739 / DSM 1576 / NBRC 3972 / NCIMB 8545 / WDCM 00012 / Crooks).